Consider the following 1407-residue polypeptide: YEATS domain-containing protein 2 (1407 aa).

Lys-9 is covalently cross-linked (Glycyl lysine isopeptide (Lys-Gly) (interchain with G-Cter in SUMO2)). Residues Met-54 to Ala-80 are a coiled coil. Lys-113 participates in a covalent cross-link: Glycyl lysine isopeptide (Lys-Gly) (interchain with G-Cter in SUMO2). The segment at Leu-116–Asp-196 is disordered. 3 positions are modified to phosphoserine: Ser-118, Ser-120, and Ser-157. Residues Pro-119 to Asp-148 show a composition bias toward polar residues. Basic and acidic residues predominate over residues Phe-149–Pro-165. Lys-189 participates in a covalent cross-link: Glycyl lysine isopeptide (Lys-Gly) (interchain with G-Cter in SUMO2). The YEATS domain occupies Glu-201–Glu-346. 2 histone H3K27cr binding regions span residues His-260 to Ser-262 and Trp-283 to Glu-285. Thr-406 is subject to Phosphothreonine. Phosphoserine occurs at positions 446, 462, 464, 470, and 472. The tract at residues Ser-462–His-540 is disordered. A Phosphothreonine modification is found at Thr-477. A Glycyl lysine isopeptide (Lys-Gly) (interchain with G-Cter in SUMO2) cross-link involves residue Lys-486. Positions Ser-511–Ser-520 are enriched in low complexity. Phosphoserine is present on Ser-534. Lys-550 participates in a covalent cross-link: Glycyl lysine isopeptide (Lys-Gly) (interchain with G-Cter in SUMO2). Phosphoserine is present on Ser-573. Residue Lys-590 forms a Glycyl lysine isopeptide (Lys-Gly) (interchain with G-Cter in SUMO2) linkage. A Phosphoserine modification is found at Ser-625. Residues Lys-647 and Lys-771 each participate in a glycyl lysine isopeptide (Lys-Gly) (interchain with G-Cter in SUMO2) cross-link. A disordered region spans residues Ser-791–Thr-833. Gly residues predominate over residues Ala-795–Pro-829. A Glycyl lysine isopeptide (Lys-Gly) (interchain with G-Cter in SUMO2) cross-link involves residue Lys-908. Lys-1095 participates in a covalent cross-link: Glycyl lysine isopeptide (Lys-Gly) (interchain with G-Cter in SUMO1); alternate. Residue Lys-1095 forms a Glycyl lysine isopeptide (Lys-Gly) (interchain with G-Cter in SUMO2); alternate linkage. Lys-1115 participates in a covalent cross-link: Glycyl lysine isopeptide (Lys-Gly) (interchain with G-Cter in SUMO2). Position 1204 is a phosphothreonine (Thr-1204). Glycyl lysine isopeptide (Lys-Gly) (interchain with G-Cter in SUMO2) cross-links involve residues Lys-1207 and Lys-1270.

Component of the ADA2A-containing complex (ATAC), composed of KAT14, KAT2A, TADA2L, TADA3L, ZZ3, MBIP, WDR5, YEATS2, SGF29 and DR1.

The protein localises to the nucleus. Its function is as follows. Chromatin reader component of the ATAC complex, a complex with histone acetyltransferase activity on histones H3 and H4. YEATS2 specifically recognizes and binds histone H3 crotonylated at 'Lys-27' (H3K27cr). Crotonylation marks active promoters and enhancers and confers resistance to transcriptional repressors. The sequence is that of YEATS domain-containing protein 2 from Mus musculus (Mouse).